The sequence spans 498 residues: ATP synthase subunit beta, chloroplastic (498 aa).

ATP is bound at residue 172–179; it reads GGAGVGKT.

The protein belongs to the ATPase alpha/beta chains family. F-type ATPases have 2 components, CF(1) - the catalytic core - and CF(0) - the membrane proton channel. CF(1) has five subunits: alpha(3), beta(3), gamma(1), delta(1), epsilon(1). CF(0) has four main subunits: a(1), b(1), b'(1) and c(9-12).

It is found in the plastid. The protein localises to the chloroplast thylakoid membrane. It catalyses the reaction ATP + H2O + 4 H(+)(in) = ADP + phosphate + 5 H(+)(out). Produces ATP from ADP in the presence of a proton gradient across the membrane. The catalytic sites are hosted primarily by the beta subunits. The polypeptide is ATP synthase subunit beta, chloroplastic (Panax ginseng (Korean ginseng)).